We begin with the raw amino-acid sequence, 1966 residues long: Dedicator of cytokinesis protein 4 (1966 aa).

Residues 6–67 enclose the SH3 domain; the sequence is EHEKYGVVIA…PSSYVHLKNA (62 aa). Tyrosine 167 is modified (phosphotyrosine). At threonine 193 the chain carries Phosphothreonine. The region spanning 401–574 is the C2 DOCK-type domain; it reads RNDLYITIER…ESFCITSFLC (174 aa). The DOCKER domain occupies 1190-1596; sequence KTELNKEEMY…LGIQEFSACM (407 aa). Residues serine 1599, serine 1607, serine 1614, serine 1618, serine 1620, and serine 1631 each carry the phosphoserine modification. Disordered stretches follow at residues 1648–1729 and 1742–1966; these read SQAS…IYPT and IGDG…VSQL. The span at 1672 to 1703 shows a compositional bias: low complexity; it reads PSPSTSSLSSTHSASPNVTSSAPSSARASPLL. The residue at position 1769 (serine 1769) is a Phosphoserine. The SH3-binding signature appears at 1788 to 1794; it reads PPVPPRP. Residues 1795 to 1809 show a composition bias toward polar residues; that stretch reads TQTASPARHTTSVSP. The segment covering 1838-1863 has biased composition (low complexity); the sequence is SNSPVLSGSYSSGISSLSRCSTSETS. Residues 1864–1873 show a composition bias toward polar residues; sequence GFENQVNEQS. Positions 1941–1954 are enriched in basic and acidic residues; that stretch reads SHLENGARRTDPGP.

It belongs to the DOCK family. As to quaternary structure, interacts with nucleotide-free Rap1; functions as a guanine nucleotide exchange factor (GEF) for Rap1. Interacts (via DOCKER domain) with RAC1; functions as a guanine nucleotide exchange factor (GEF) for RAC1. Interacts with the SH3 domain of CRK. Interacts with FASLG. Interacts with ELMO2 and EPHA2; mediates activation of RAC1 by EPHA2. Interacts with USH1C (via PDZ 1 domain). Widely expressed at low level. Highly expressed in skeletal muscle, prostate and ovary. In terms of tissue distribution, may be specifically expressed in the brain and eye.

It is found in the cell membrane. The protein localises to the cell projection. The protein resides in the cytoplasm. It localises to the cytosol. Functionally, functions as a guanine nucleotide exchange factor (GEF) that promotes the exchange of GDP to GTP, converting inactive GDP-bound small GTPases into their active GTP-bound form. Involved in regulation of adherens junction between cells. Plays a role in cell migration. In terms of biological role, has a higher guanine nucleotide exchange factor activity compared to other isoforms. The polypeptide is Dedicator of cytokinesis protein 4 (DOCK4) (Homo sapiens (Human)).